Consider the following 445-residue polypeptide: Histidinol dehydrogenase (445 aa).

NAD(+)-binding residues include Y144, Q205, and N228. S251, Q273, and H276 together coordinate substrate. 2 residues coordinate Zn(2+): Q273 and H276. Residues E341 and H342 each act as proton acceptor in the active site. Substrate contacts are provided by H342, D375, E429, and H434. Residue D375 coordinates Zn(2+). H434 serves as a coordination point for Zn(2+).

It belongs to the histidinol dehydrogenase family. It depends on Zn(2+) as a cofactor.

It carries out the reaction L-histidinol + 2 NAD(+) + H2O = L-histidine + 2 NADH + 3 H(+). The protein operates within amino-acid biosynthesis; L-histidine biosynthesis; L-histidine from 5-phospho-alpha-D-ribose 1-diphosphate: step 9/9. Functionally, catalyzes the sequential NAD-dependent oxidations of L-histidinol to L-histidinaldehyde and then to L-histidine. This is Histidinol dehydrogenase from Cupriavidus pinatubonensis (strain JMP 134 / LMG 1197) (Cupriavidus necator (strain JMP 134)).